The sequence spans 354 residues: Probable trehalose-phosphate phosphatase E (354 aa).

Belongs to the trehalose phosphatase family. It depends on a divalent metal cation as a cofactor.

It carries out the reaction alpha,alpha-trehalose 6-phosphate + H2O = alpha,alpha-trehalose + phosphate. The protein operates within glycan biosynthesis; trehalose biosynthesis. Its function is as follows. Removes the phosphate from trehalose 6-phosphate to produce free trehalose. Trehalose accumulation in plant may improve abiotic stress tolerance. The protein is Probable trehalose-phosphate phosphatase E (TPPE) of Arabidopsis thaliana (Mouse-ear cress).